A 452-amino-acid polypeptide reads, in one-letter code: Friend leukemia integration 1 transcription factor (452 aa).

The residue at position 39 (serine 39) is a Phosphoserine. One can recognise a PNT domain in the interval 112–198; it reads PPPPNMTTNE…SHLTYLRESS (87 aa). The segment covering 202–214 has biased composition (polar residues); the sequence is YNTTSHTDPSSRL. The tract at residues 202–272 is disordered; sequence YNTTSHTDPS…YQILGPTSSR (71 aa). Residues 215–226 are compositionally biased toward basic and acidic residues; sequence NVKEDPSYDSVR. Positions 248–257 are enriched in polar residues; it reads QTMSKNTEQR. Positions 281 to 361 form a DNA-binding region, ETS; sequence IQLWQFLLEL…HGKRYAYKFD (81 aa).

Belongs to the ETS family. Can form homodimers or heterodimers with ETV6/TEL1.

Its subcellular location is the nucleus. In terms of biological role, sequence-specific transcriptional activator. Recognizes the DNA sequence 5'-C[CA]GGAAGT-3'. This chain is Friend leukemia integration 1 transcription factor (FLI1), found in Bos taurus (Bovine).